We begin with the raw amino-acid sequence, 198 residues long: Glycerol-3-phosphate acyltransferase (198 aa).

The next 4 membrane-spanning stretches (helical) occupy residues 3–23 (VEWL…AVIV), 81–101 (LFAA…FFQF), 113–133 (VLLG…IGVA), and 153–175 (YVWL…MLLV).

It belongs to the PlsY family. As to quaternary structure, probably interacts with PlsX.

Its subcellular location is the cell inner membrane. It carries out the reaction an acyl phosphate + sn-glycerol 3-phosphate = a 1-acyl-sn-glycero-3-phosphate + phosphate. The protein operates within lipid metabolism; phospholipid metabolism. Its function is as follows. Catalyzes the transfer of an acyl group from acyl-phosphate (acyl-PO(4)) to glycerol-3-phosphate (G3P) to form lysophosphatidic acid (LPA). This enzyme utilizes acyl-phosphate as fatty acyl donor, but not acyl-CoA or acyl-ACP. The polypeptide is Glycerol-3-phosphate acyltransferase (Methylococcus capsulatus (strain ATCC 33009 / NCIMB 11132 / Bath)).